Consider the following 620-residue polypeptide: MALLQIAEPGQSASPHQHKLAVGIDLGTTNSLIATVRSGQVDILLDEKERPLLPSVVHFEQDNVIVGYEAAELASQSPQNTIVSVKRLIGRSLADVQQRYPSLPYQFEASENGLPLIRTSKGTLSPVEISAEILKKLTALAEKRLAGELSGAVITVPAYFDDAQRQSTKDAAKLAGINVLRLLNEPTAAAIAYGLDSGQEGVIAVYDLGGGTFDISILRLSKGVFEVLATGGDTALGGDDFDHQLMDWIVAQSGIAPQNAQQQRQLTELATQIKIALTDKLETSISYQGWQGNISREQFNQLIQGLVKRSLLACRRALKDADVSADEVCEVVMVGGSTRVPFVREQVAAFFQKEPLTSIDPDKVVALGAGIQADILVGNKPDADMLLLDVIPLSLGIETMGGLVEKIIPRNTTIPVARAQEFTTFKDGQTAMSVHVVQGEREMVADCRSLARFSLRGIPAMAAGAAHVRVTYQVDADGLLSVTAMEKSTGVQSSIQVKPSYGLSDDEITNMLKASMLNAKEDIQARLLAEQRVEAQRVLESVGSALSADQDLLNDEELSAVKNAIISLQRLQKEGDTQEIKQGIKQLDLATQEFASRRMDKSIRQALAGKAIDDVMKNAK.

This sequence belongs to the heat shock protein 70 family.

Its function is as follows. Chaperone involved in the maturation of iron-sulfur cluster-containing proteins. Has a low intrinsic ATPase activity which is markedly stimulated by HscB. The sequence is that of Chaperone protein HscA homolog from Pasteurella multocida (strain Pm70).